Here is a 374-residue protein sequence, read N- to C-terminus: Inner membrane transport permease YhhJ (374 aa).

At Met1–Lys22 the chain is on the cytoplasmic side. A helical transmembrane segment spans residues Ala23–Thr43. Residues Pro44–Asp172 are Periplasmic-facing. The ABC transmembrane type-2 domain maps to Asn133–Thr369. The chain crosses the membrane as a helical span at residues Pro173–Leu193. The Cytoplasmic portion of the chain corresponds to Thr194–Gly229. The chain crosses the membrane as a helical span at residues Leu230 to Val250. The Periplasmic segment spans residues Pro251 to Ser255. Residues Ile256–Phe276 form a helical membrane-spanning segment. The Cytoplasmic portion of the chain corresponds to Met277 to Ser283. Residues Met284–Gly304 traverse the membrane as a helical segment. Over Ser305 to Glu342 the chain is Periplasmic. Residues Ile343 to Leu363 traverse the membrane as a helical segment. Residues Leu364–Ala374 are Cytoplasmic-facing.

It belongs to the ABC-2 integral membrane protein family.

It localises to the cell inner membrane. This is Inner membrane transport permease YhhJ (yhhJ) from Escherichia coli (strain K12).